A 285-amino-acid polypeptide reads, in one-letter code: MDDFVSESESDYASYWRDWFISSRGNEYFCEIDEDYITDRFNLTGLNTEVQYYQYALDLITDVFDLDCDDDMRETIEKSARHLYGLVHARYIVTTRGLQKMFEKYKKADFGKCPRVMCSSHPLLPMGLSDVPNSKPVKLYCARCEDIYNPKSSRHAAIDGAYFGTSFHNIFFQVYPTLVPAKSVERYIPRCYGFKVHAAAALVRWQNSQRDEMRRRLRKLEVESGFKDAEDEAELDDDDEEEEEEEEEEEELAAMDEAEGAQQQHAAAAAGTATGGVAAGGEGVH.

The segment at 226–285 is disordered; it reads FKDAEDEAELDDDDEEEEEEEEEEEELAAMDEAEGAQQQHAAAAAGTATGGVAAGGEGVH. Over residues 229–259 the composition is skewed to acidic residues; sequence AEDEAELDDDDEEEEEEEEEEEELAAMDEAE. The segment covering 260-272 has biased composition (low complexity); sequence GAQQQHAAAAAGT. Residues 273–285 show a composition bias toward gly residues; it reads ATGGVAAGGEGVH.

Belongs to the casein kinase 2 subunit beta family. Tetramer composed of two alpha chains, one beta chain and one beta' chain. Post-translationally, phosphorylated by alpha subunit.

Functionally, regulatory subunit of casein kinase II/CK2. As part of the kinase complex regulates the basal catalytic activity of the alpha subunit a constitutively active serine/threonine-protein kinase that phosphorylates a large number of substrates containing acidic residues C-terminal to the phosphorylated serine or threonine. The chain is Casein kinase II subunit beta-2 (ckb-2) from Neurospora crassa (strain ATCC 24698 / 74-OR23-1A / CBS 708.71 / DSM 1257 / FGSC 987).